Here is a 505-residue protein sequence, read N- to C-terminus: ATP synthase subunit alpha (505 aa).

G171 to T178 contributes to the ATP binding site.

This sequence belongs to the ATPase alpha/beta chains family. As to quaternary structure, F-type ATPases have 2 components, CF(1) - the catalytic core - and CF(0) - the membrane proton channel. CF(1) has five subunits: alpha(3), beta(3), gamma(1), delta(1), epsilon(1). CF(0) has three main subunits: a(1), b(2) and c(9-12). The alpha and beta chains form an alternating ring which encloses part of the gamma chain. CF(1) is attached to CF(0) by a central stalk formed by the gamma and epsilon chains, while a peripheral stalk is formed by the delta and b chains.

Its subcellular location is the cell inner membrane. It catalyses the reaction ATP + H2O + 4 H(+)(in) = ADP + phosphate + 5 H(+)(out). In terms of biological role, produces ATP from ADP in the presence of a proton gradient across the membrane. The alpha chain is a regulatory subunit. The sequence is that of ATP synthase subunit alpha from Campylobacter curvus (strain 525.92).